Reading from the N-terminus, the 687-residue chain is DNA ligase (687 aa).

NAD(+)-binding positions include 34–38 (DAEYD), 83–84 (SL), and Glu-117. Lys-119 acts as the N6-AMP-lysine intermediate in catalysis. Residues Arg-140, Glu-182, Lys-298, and Lys-322 each coordinate NAD(+). Positions 416, 419, 434, and 439 each coordinate Zn(2+). The region spanning 609 to 687 (EARGPFAGKT…EEEFVRLLKE (79 aa)) is the BRCT domain.

Belongs to the NAD-dependent DNA ligase family. LigA subfamily. Mg(2+) is required as a cofactor. It depends on Mn(2+) as a cofactor.

It catalyses the reaction NAD(+) + (deoxyribonucleotide)n-3'-hydroxyl + 5'-phospho-(deoxyribonucleotide)m = (deoxyribonucleotide)n+m + AMP + beta-nicotinamide D-nucleotide.. DNA ligase that catalyzes the formation of phosphodiester linkages between 5'-phosphoryl and 3'-hydroxyl groups in double-stranded DNA using NAD as a coenzyme and as the energy source for the reaction. It is essential for DNA replication and repair of damaged DNA. In Anaeromyxobacter sp. (strain K), this protein is DNA ligase.